We begin with the raw amino-acid sequence, 145 residues long: Catabolic 3-dehydroquinase (145 aa).

Catalysis depends on Y24, which acts as the Proton acceptor. Residues N77, H83, and D90 each coordinate substrate. Catalysis depends on H103, which acts as the Proton donor. Substrate contacts are provided by residues 104-105 (IT) and R114.

The protein belongs to the type-II 3-dehydroquinase family. Homododecamer. Adopts a ring-like structure, composed of an arrangement of two hexameric rings stacked on top of one another.

It catalyses the reaction 3-dehydroquinate = 3-dehydroshikimate + H2O. It functions in the pathway aromatic compound metabolism; 3,4-dihydroxybenzoate biosynthesis; 3,4-dihydroxybenzoate from 3-dehydroquinate: step 1/2. In terms of biological role, is involved in the catabolism of quinate. Allows the utilization of quinate as carbon source via the beta-ketoadipate pathway. The polypeptide is Catabolic 3-dehydroquinase (Clavispora lusitaniae (strain ATCC 42720) (Yeast)).